The sequence spans 180 residues: Translation initiation factor IF-3 (180 aa).

It belongs to the IF-3 family. In terms of assembly, monomer.

Its subcellular location is the cytoplasm. IF-3 binds to the 30S ribosomal subunit and shifts the equilibrium between 70S ribosomes and their 50S and 30S subunits in favor of the free subunits, thus enhancing the availability of 30S subunits on which protein synthesis initiation begins. This is Translation initiation factor IF-3 from Shewanella baltica (strain OS223).